Here is a 418-residue protein sequence, read N- to C-terminus: MTAPKSEFLAVVRDRGFIHQCTDLDGLDALLAKGPVSAYIGFDCTADSLHVGSLIQIMLLHWLQRTGHRPVVLMGGGTTRIGDPSFRDEARPLLTDEKIGQNMAGIRQVFSRFLSFGEGATDAVMVNNADWLDGLAYIPFLRDFGRHFSVNRMLTFDSVRLRLDREQPLSFLEFNYMILQAYDFLELGRRTGVRLQMGGSDQWGNIVNGVELGRRVDGLELFGLTSPLITTASGAKMGKTAQGAVWLNEARLPAYDYWQFWRNTEDADVGRFLRLFTDLPLDEVARLEALGGAEINEAKKILAERATTMAHGPEAALTAAETARKVFEQGGTGDALPTHDVAAEALAAGLPLAEMMRATGLAASGKEVKRLVSEGGARINDVAVSDAARLLGPADVQDGAIKLSAGKKRHALIRVLPG.

An L-tyrosine-binding site is contributed by Tyr-39. A 'HIGH' region motif is present at residues 44–53 (CTADSLHVGS). L-tyrosine is bound by residues Tyr-176 and Gln-180. Residues 236–240 (KMGKT) carry the 'KMSKS' region motif. Lys-239 serves as a coordination point for ATP. Residues 350 to 416 (LPLAEMMRAT…KKRHALIRVL (67 aa)) enclose the S4 RNA-binding domain.

It belongs to the class-I aminoacyl-tRNA synthetase family. TyrS type 1 subfamily. In terms of assembly, homodimer.

The protein localises to the cytoplasm. It carries out the reaction tRNA(Tyr) + L-tyrosine + ATP = L-tyrosyl-tRNA(Tyr) + AMP + diphosphate + H(+). In terms of biological role, catalyzes the attachment of tyrosine to tRNA(Tyr) in a two-step reaction: tyrosine is first activated by ATP to form Tyr-AMP and then transferred to the acceptor end of tRNA(Tyr). This is Tyrosine--tRNA ligase from Rhodospirillum rubrum (strain ATCC 11170 / ATH 1.1.1 / DSM 467 / LMG 4362 / NCIMB 8255 / S1).